Reading from the N-terminus, the 308-residue chain is Cytochrome b (308 aa).

Transmembrane regions (helical) follow at residues 1–21, 45–66, 81–101, and 146–166; these read FGSLLGICLMTQIITGLLMAM, WLIRNLHANGASMFFICIYLHI, WNTGVILLLTLMATAFVGYVL, and FFALHFLLPFMIAGLTFIHLT. Heme b is bound by residues H51 and H65. Residues H150 and H164 each coordinate heme b. H169 is an a ubiquinone binding site. Helical transmembrane passes span 194–214, 256–276, and 288–308; these read TKDILGFLAMLVPLTALAMFS, LGGVLALAASVLILFLIPFLH, and LSQLLFWILVTNLLILTWVGS.

It belongs to the cytochrome b family. As to quaternary structure, the cytochrome bc1 complex contains 11 subunits: 3 respiratory subunits (MT-CYB, CYC1 and UQCRFS1), 2 core proteins (UQCRC1 and UQCRC2) and 6 low-molecular weight proteins (UQCRH/QCR6, UQCRB/QCR7, UQCRQ/QCR8, UQCR10/QCR9, UQCR11/QCR10 and a cleavage product of UQCRFS1). This cytochrome bc1 complex then forms a dimer. Requires heme b as cofactor.

The protein resides in the mitochondrion inner membrane. Its function is as follows. Component of the ubiquinol-cytochrome c reductase complex (complex III or cytochrome b-c1 complex) that is part of the mitochondrial respiratory chain. The b-c1 complex mediates electron transfer from ubiquinol to cytochrome c. Contributes to the generation of a proton gradient across the mitochondrial membrane that is then used for ATP synthesis. This Asthenes dorbignyi (Creamy-breasted canastero) protein is Cytochrome b (MT-CYB).